The sequence spans 529 residues: Bifunctional purine biosynthesis protein PurH (529 aa).

In terms of domain architecture, MGS-like spans 1-148 (MQQRRPVRRA…KNHKDVAIVV (148 aa)).

This sequence belongs to the PurH family.

It carries out the reaction (6R)-10-formyltetrahydrofolate + 5-amino-1-(5-phospho-beta-D-ribosyl)imidazole-4-carboxamide = 5-formamido-1-(5-phospho-D-ribosyl)imidazole-4-carboxamide + (6S)-5,6,7,8-tetrahydrofolate. It catalyses the reaction IMP + H2O = 5-formamido-1-(5-phospho-D-ribosyl)imidazole-4-carboxamide. It functions in the pathway purine metabolism; IMP biosynthesis via de novo pathway; 5-formamido-1-(5-phospho-D-ribosyl)imidazole-4-carboxamide from 5-amino-1-(5-phospho-D-ribosyl)imidazole-4-carboxamide (10-formyl THF route): step 1/1. It participates in purine metabolism; IMP biosynthesis via de novo pathway; IMP from 5-formamido-1-(5-phospho-D-ribosyl)imidazole-4-carboxamide: step 1/1. The sequence is that of Bifunctional purine biosynthesis protein PurH from Klebsiella pneumoniae subsp. pneumoniae (strain ATCC 700721 / MGH 78578).